The primary structure comprises 475 residues: Aspartyl/glutamyl-tRNA(Asn/Gln) amidotransferase subunit B (475 aa).

The protein belongs to the GatB/GatE family. GatB subfamily. Heterotrimer of A, B and C subunits.

It carries out the reaction L-glutamyl-tRNA(Gln) + L-glutamine + ATP + H2O = L-glutaminyl-tRNA(Gln) + L-glutamate + ADP + phosphate + H(+). The enzyme catalyses L-aspartyl-tRNA(Asn) + L-glutamine + ATP + H2O = L-asparaginyl-tRNA(Asn) + L-glutamate + ADP + phosphate + 2 H(+). In terms of biological role, allows the formation of correctly charged Asn-tRNA(Asn) or Gln-tRNA(Gln) through the transamidation of misacylated Asp-tRNA(Asn) or Glu-tRNA(Gln) in organisms which lack either or both of asparaginyl-tRNA or glutaminyl-tRNA synthetases. The reaction takes place in the presence of glutamine and ATP through an activated phospho-Asp-tRNA(Asn) or phospho-Glu-tRNA(Gln). In Thermoanaerobacter sp. (strain X514), this protein is Aspartyl/glutamyl-tRNA(Asn/Gln) amidotransferase subunit B.